The chain runs to 225 residues: Ribonuclease 3 (225 aa).

The region spanning 2–128 is the RNase III domain; the sequence is LSTLIKKLKI…LFGAIYLDLG (127 aa). Residue Glu-43 coordinates Mg(2+). Asp-47 is an active-site residue. The Mg(2+) site is built by Asn-114 and Glu-117. Residue Glu-117 is part of the active site. One can recognise a DRBM domain in the interval 152 to 220; it reads DFKTQLQELV…ARYVLNILSK (69 aa).

It belongs to the ribonuclease III family. As to quaternary structure, homodimer. Mg(2+) serves as cofactor.

Its subcellular location is the cytoplasm. The enzyme catalyses Endonucleolytic cleavage to 5'-phosphomonoester.. In terms of biological role, digests double-stranded RNA. Involved in the processing of primary rRNA transcript to yield the immediate precursors to the large and small rRNAs (23S and 16S). Processes some mRNAs, and tRNAs when they are encoded in the rRNA operon. Processes pre-crRNA and tracrRNA of type II CRISPR loci if present in the organism. This chain is Ribonuclease 3, found in Phytoplasma mali (strain AT).